Consider the following 205-residue polypeptide: Thymidylate kinase (205 aa).

9 to 16 (GPEGSGKT) contacts ATP.

Belongs to the thymidylate kinase family.

The catalysed reaction is dTMP + ATP = dTDP + ADP. In terms of biological role, phosphorylation of dTMP to form dTDP in both de novo and salvage pathways of dTTP synthesis. This Staphylococcus aureus (strain MSSA476) protein is Thymidylate kinase.